A 586-amino-acid polypeptide reads, in one-letter code: NudC domain-containing protein 1 (586 aa).

The CS domain maps to 275–364 (KREPLYNWQQ…EPGCTWAELV (90 aa)).

Its subcellular location is the cytoplasm. It localises to the nucleus. This chain is NudC domain-containing protein 1, found in Xenopus laevis (African clawed frog).